A 282-amino-acid chain; its full sequence is uncharacterized protein (282 aa).

Positions 2-78 constitute an HTH rpiR-type domain; that stretch reads TDVLAVIREM…IKIAVSLAKQ (77 aa). The H-T-H motif DNA-binding region spans 38-57; it reads VNELANACDTSEASIIRFCR. Positions 122–262 constitute an SIS domain; it reads AAEALANANK…FILVAQKKYN (141 aa).

This is an uncharacterized protein from Caldanaerobacter subterraneus subsp. tengcongensis (strain DSM 15242 / JCM 11007 / NBRC 100824 / MB4) (Thermoanaerobacter tengcongensis).